Here is a 145-residue protein sequence, read N- to C-terminus: Ribonuclease HI (145 aa).

In terms of domain architecture, RNase H type-1 spans 1-142 (MNQTVYLYTD…ADDLANRGAA (142 aa)). D10, E48, D70, and D134 together coordinate Mg(2+).

The protein belongs to the RNase H family. As to quaternary structure, monomer. Mg(2+) serves as cofactor.

The protein resides in the cytoplasm. It carries out the reaction Endonucleolytic cleavage to 5'-phosphomonoester.. In terms of biological role, endonuclease that specifically degrades the RNA of RNA-DNA hybrids. This is Ribonuclease HI from Neisseria meningitidis serogroup B (strain ATCC BAA-335 / MC58).